A 369-amino-acid polypeptide reads, in one-letter code: Porphobilinogen deaminase, chloroplastic (369 aa).

A chloroplast-targeting transit peptide spans 1 to 46 (MEMTLYSSSSFSLPSAPSNPSLSLFTSSFRFSSFKTSPFSKCRIRA). Residue C303 is modified to S-(dipyrrolylmethanemethyl)cysteine.

Belongs to the HMBS family. Requires dipyrromethane as cofactor.

The protein localises to the plastid. It localises to the chloroplast. It catalyses the reaction 4 porphobilinogen + H2O = hydroxymethylbilane + 4 NH4(+). Its pathway is porphyrin-containing compound metabolism; protoporphyrin-IX biosynthesis; coproporphyrinogen-III from 5-aminolevulinate: step 2/4. It functions in the pathway porphyrin-containing compound metabolism; chlorophyll biosynthesis. In terms of biological role, tetrapolymerization of the monopyrrole PBG into the hydroxymethylbilane pre-uroporphyrinogen in several discrete steps. The chain is Porphobilinogen deaminase, chloroplastic (HEMC) from Pisum sativum (Garden pea).